The primary structure comprises 655 residues: p-hydroxybenzoic acid efflux pump subunit AaeB (655 aa).

11 helical membrane passes run 13 to 33, 38 to 58, 69 to 89, 93 to 113, 121 to 141, 152 to 172, 370 to 390, 407 to 427, 431 to 451, 459 to 479, and 482 to 502; these read FAVK…HFQL, WAVL…GGEP, LRII…ISMI, LLMI…SSLV, WGLS…EPLL, EIVI…PRSI, LFWL…IAVV, FIYG…VIIP, QSML…GIEV, MGAL…TFHF, and FLDS…VILL.

The protein belongs to the aromatic acid exporter ArAE (TC 2.A.85) family.

It is found in the cell inner membrane. Functionally, forms an efflux pump with AaeA. Could function as a metabolic relief valve, allowing to eliminate certain compounds when they accumulate to high levels in the cell. The sequence is that of p-hydroxybenzoic acid efflux pump subunit AaeB from Salmonella agona (strain SL483).